The following is a 360-amino-acid chain: DNA replication and repair protein RecF (360 aa).

Residue glycine 30–threonine 37 participates in ATP binding.

The protein belongs to the RecF family.

Its subcellular location is the cytoplasm. The RecF protein is involved in DNA metabolism; it is required for DNA replication and normal SOS inducibility. RecF binds preferentially to single-stranded, linear DNA. It also seems to bind ATP. This is DNA replication and repair protein RecF from Shewanella frigidimarina (strain NCIMB 400).